We begin with the raw amino-acid sequence, 126 residues long: Large ribosomal subunit protein bL12 (126 aa).

A disordered region spans residues 97-126; sequence PQPVKSGVSKEEAEEAKKQLAESGAEVEVK. Over residues 104–116 the composition is skewed to basic and acidic residues; that stretch reads VSKEEAEEAKKQL.

The protein belongs to the bacterial ribosomal protein bL12 family. In terms of assembly, homodimer. Part of the ribosomal stalk of the 50S ribosomal subunit. Forms a multimeric L10(L12)X complex, where L10 forms an elongated spine to which 2 to 4 L12 dimers bind in a sequential fashion. Binds GTP-bound translation factors.

In terms of biological role, forms part of the ribosomal stalk which helps the ribosome interact with GTP-bound translation factors. Is thus essential for accurate translation. This is Large ribosomal subunit protein bL12 from Geotalea uraniireducens (strain Rf4) (Geobacter uraniireducens).